The chain runs to 183 residues: Ribulose bisphosphate carboxylase small subunit, chloroplastic 3 (183 aa).

Residues 1-43 (MATTMLNRSVIVNKEVAKTPNFPRATKNNKGFASNAAVQKCRD) constitute a chloroplast transit peptide.

The protein belongs to the RuBisCO small chain family. As to quaternary structure, heterohexadecamer of 8 large and 8 small subunits.

Its subcellular location is the plastid. The protein resides in the chloroplast. Its function is as follows. RuBisCO catalyzes two reactions: the carboxylation of D-ribulose 1,5-bisphosphate, the primary event in carbon dioxide fixation, as well as the oxidative fragmentation of the pentose substrate. Both reactions occur simultaneously and in competition at the same active site. Although the small subunit is not catalytic it is essential for maximal activity. This chain is Ribulose bisphosphate carboxylase small subunit, chloroplastic 3, found in Acetabularia peniculus (Green alga).